The sequence spans 134 residues: MPPKGRQGAAKKVRRKEKKNVAHGHAHIKSTFNNTIVSITDPSGNVISWASAGHVGFKGSRKSTPFAAQMAAESAARRAQEHGMRKVDVFVKGPGSGRETAIRSLQATGLEVGSIQDVTPTPHNGCRPPKRRRV.

2 disordered regions span residues 1–22 (MPPK…KNVA) and 114–134 (SIQD…RRRV). Positions 9–22 (AAKKVRRKEKKNVA) are enriched in basic residues.

This sequence belongs to the universal ribosomal protein uS11 family. As to quaternary structure, part of the 30S ribosomal subunit. Interacts with proteins S7 and S18. Binds to IF-3.

Functionally, located on the platform of the 30S subunit, it bridges several disparate RNA helices of the 16S rRNA. Forms part of the Shine-Dalgarno cleft in the 70S ribosome. The chain is Small ribosomal subunit protein uS11 from Streptomyces avermitilis (strain ATCC 31267 / DSM 46492 / JCM 5070 / NBRC 14893 / NCIMB 12804 / NRRL 8165 / MA-4680).